Here is a 563-residue protein sequence, read N- to C-terminus: GTPase Obg (563 aa).

An Obg domain is found at 2–168 (SDFVDRVTVH…RDVILELKSI (167 aa)). In terms of domain architecture, OBG-type G spans 169–349 (ADVALVGFPS…LNFALSALVH (181 aa)). GTP contacts are provided by residues 175–182 (GFPSAGKS), 200–204 (FTTLV), 221–224 (DVPG), 301–304 (NKID), and 330–332 (STA). Residues Ser-182 and Thr-202 each coordinate Mg(2+). Positions 383-469 (DEGGSALEFT…ARMVEFDWDP (87 aa)) constitute an OCT domain. Residues 529–563 (RKAGHWADPTVDDDRHDETSLFGHGESSEDGETEE) are disordered.

It belongs to the TRAFAC class OBG-HflX-like GTPase superfamily. OBG GTPase family. In terms of assembly, monomer. Requires Mg(2+) as cofactor.

Its subcellular location is the cytoplasm. Its function is as follows. An essential GTPase which binds GTP, GDP and possibly (p)ppGpp with moderate affinity, with high nucleotide exchange rates and a fairly low GTP hydrolysis rate. Plays a role in control of the cell cycle, stress response, ribosome biogenesis and in those bacteria that undergo differentiation, in morphogenesis control. The sequence is that of GTPase Obg from Bifidobacterium longum (strain NCC 2705).